A 425-amino-acid polypeptide reads, in one-letter code: Pleckstrin homology domain-containing family A member 2 (425 aa).

A PH 1 domain is found at 7-113; the sequence is QNRICGFLDI…WVEALNQASK (107 aa). A Glycyl lysine isopeptide (Lys-Gly) (interchain with G-Cter in SUMO2) cross-link involves residue Lys141. Residue Ser184 is modified to Phosphoserine. One can recognise a PH 2 domain in the interval 198–298; sequence PLIKSGYCVK…WIKEIGAAVQ (101 aa). The span at 312–330 shows a compositional bias: low complexity; the sequence is SISLTRPGSSSLSSGPNSI. The disordered stretch occupies residues 312 to 332; it reads SISLTRPGSSSLSSGPNSILC. Phosphoserine is present on residues Ser314 and Ser349. A disordered region spans residues 352–425; sequence SSWQPWTPVP…DDENIRTSDV (74 aa). Residues 400–410 show a composition bias toward basic and acidic residues; that stretch reads RSEPQHPKEKP.

Binds MPDZ and PTPN13. As to expression, highly expressed in heart, kidney, spleen and peripheral blood leukocytes. Detected at lower levels in brain, skeletal muscle, colon, thymus, liver, small intestine, placenta and lung.

The protein localises to the cytoplasm. It localises to the cell membrane. It is found in the nucleus. Binds specifically to phosphatidylinositol 3,4-diphosphate (PtdIns3,4P2), but not to other phosphoinositides. May recruit other proteins to the plasma membrane. This chain is Pleckstrin homology domain-containing family A member 2 (PLEKHA2), found in Homo sapiens (Human).